Reading from the N-terminus, the 538-residue chain is Potassium channel subfamily K member 10 (538 aa).

Residues 1 to 71 (MFFLYTDFFL…GLQTVMKWKT (71 aa)) are Cytoplasmic-facing. Residues 72 to 92 (VVAIFVVVVVYLVTGGLVFRA) form a helical membrane-spanning segment. 3 N-linked (GlcNAc...) asparagine glycosylation sites follow: asparagine 144, asparagine 147, and asparagine 148. Residues 154–180 (LGSAFFFAGTVITTIGYGNIAPSTEGG) constitute an intramembrane region (pore-forming). Positions 167, 168, 169, and 170 each coordinate K(+). The interval 167-172 (TIGYGN) is selectivity filter 1. The helical transmembrane segment at 182-202 (IFCILYAIFGIPLFGFLLAGI) threads the bilayer. At 203–233 (GDQLGTIFGKSIARVEKVFRKKQVSQTKIRV) the chain is on the cytoplasmic side. A helical transmembrane segment spans residues 234–254 (ISTILFILAGCIVFVTIPAVI). The pore-forming intramembrane region spans 263 to 294 (ALESIYFVVVTLTTVGFGDFVAGGNAGINYRE). K(+) is bound by residues threonine 276, valine 277, glycine 278, and phenylalanine 279. The segment at 276–281 (TVGFGD) is selectivity filter 2. A helical membrane pass occupies residues 299-319 (LVWFWILVGLAYFAAVLSMIG). At 320–538 (DWLRVLSKKT…ENNSLLEDRN (219 aa)) the chain is on the cytoplasmic side. Residues 412-421 (SQESINNRPN) show a composition bias toward polar residues. 2 disordered regions span residues 412 to 443 (SQES…EDNI) and 510 to 538 (QHAE…EDRN). The span at 522–538 (DTKDREPENNSLLEDRN) shows a compositional bias: basic and acidic residues.

Belongs to the two pore domain potassium channel (TC 1.A.1.8) family. As to quaternary structure, homodimer; disulfide-linked. Forms heterodimers with other 2-pore domain K(+) channel subunits, such as KCNK2, KCNK4 and KCNK18. Abundantly expressed in pancreas and kidney and to a lower level in brain, testis, colon, and small intestine. In brain, mainly expressed in cerebellum, occipital lobe, putamen, and thalamus. No expression is detected in amygdala and spinal cord. As to expression, strongly expressed in kidney (primarily in the proximal tubule) and pancreas. In terms of tissue distribution, abundantly expressed in brain.

The protein localises to the cell membrane. It catalyses the reaction K(+)(in) = K(+)(out). The catalysed reaction is Rb(+)(in) = Rb(+)(out). It carries out the reaction Cs(+)(in) = Cs(+)(out). Its activity is regulated as follows. Activated by various stimuli including acidic pH, anesthetics chloroform, halothane and isoflurane, mechanical stretch, lipids such as arachidonic, docosahexaenoic and linoleic polyunsaturated fatty acids and lysophosphatidylcholine and lysophosphatidylinositol lysophospholipids. Inhibited by norfluoxetine, the active metabolite of antidepressant fluoxetine (Prozac). K(+) channel that conducts voltage-dependent outward rectifying currents upon membrane depolarization. Voltage sensing is coupled to K(+) electrochemical gradient in an 'ion flux gating' mode where outward but not inward ion flow opens the gate. Converts to voltage-independent 'leak' conductance mode upon stimulation by various stimuli including mechanical membrane stretch, acidic pH, heat and lipids. Homo- and heterodimerizes to form functional channels with distinct regulatory and gating properties. In trigeminal ganglia sensory neurons, the heterodimer of KCNK10/TREK-2 and KCNK18/TRESK inhibits neuronal firing and neurogenic inflammation by stabilizing the resting membrane potential at K(+) equilibrium potential as well as by regulating the threshold of action potentials and the spike frequency. Permeable to other monovalent ions such as Rb(+) and Cs(+). In Homo sapiens (Human), this protein is Potassium channel subfamily K member 10.